Consider the following 445-residue polypeptide: MKLFGTDGVRGKAGEFLDSFLAMRLAMAAGIYFKDKSITNNILVGKDTRRSGYMIENAIVSGLTSIGYNVIQIGPMPTPAIAFLTEDMRCDAGIMISASHNPYYDNGIKFFDAHGNKLSEDIEKKIEEIYFDDKLIQASKVDMEKIGQAKRIDDVIGRYIVSIKNSFPKDLTLKSLRVVLDVAHGAAYKVAPTVFKELGAEVIVMSDKPNGLNINENCGALHPANLAAEVKRLRADVGFAFDGDADRLVVVDEKGEVANGDSLLGVLALYLKEQGKLQSSVVATIMSNGALKEFLNKHGIELDTCNVGDKYVLEKLKANGGNFGGEQSGHIIFSDYAKTGDGLIAALQFSALMLSKKKSASSILGQVKPYPQLLTNLKIAEKKDLDKIKGLKELKKDLENKNINTLFRYSGTENLIRLLLEARDIKLLEKEMKNVVEFFKKALNG.

Serine 99 serves as the catalytic Phosphoserine intermediate. 4 residues coordinate Mg(2+): serine 99, aspartate 242, aspartate 244, and aspartate 246. Residue serine 99 is modified to Phosphoserine.

The protein belongs to the phosphohexose mutase family. Mg(2+) serves as cofactor. In terms of processing, activated by phosphorylation.

The catalysed reaction is alpha-D-glucosamine 1-phosphate = D-glucosamine 6-phosphate. In terms of biological role, catalyzes the conversion of glucosamine-6-phosphate to glucosamine-1-phosphate. The polypeptide is Phosphoglucosamine mutase (Campylobacter jejuni subsp. jejuni serotype O:2 (strain ATCC 700819 / NCTC 11168)).